The primary structure comprises 118 residues: Large ribosomal subunit protein uL18 (118 aa).

It belongs to the universal ribosomal protein uL18 family. Part of the 50S ribosomal subunit; part of the 5S rRNA/L5/L18/L25 subcomplex. Contacts the 5S and 23S rRNAs.

Its function is as follows. This is one of the proteins that bind and probably mediate the attachment of the 5S RNA into the large ribosomal subunit, where it forms part of the central protuberance. The polypeptide is Large ribosomal subunit protein uL18 (Dechloromonas aromatica (strain RCB)).